The primary structure comprises 144 residues: Universal stress protein A (144 aa).

This sequence belongs to the universal stress protein A family. In terms of assembly, homodimer.

Its subcellular location is the cytoplasm. Its function is as follows. Required for resistance to DNA-damaging agents. This chain is Universal stress protein A (uspA), found in Salmonella typhi.